The chain runs to 175 residues: Pathogenesis-related protein 1A1 (175 aa).

The signal sequence occupies residues 1–21 (MKSSIFVACFITFIIFHSSQA). One can recognise an SCP domain in the interval 29-146 (LNAHNAARRR…SGWVFITCNY (118 aa)). Cystine bridges form between Cys-65–Cys-135, Cys-108–Cys-114, and Cys-130–Cys-144.

Belongs to the CRISP family.

Functionally, probably involved in the defense reaction of plants against pathogens. The polypeptide is Pathogenesis-related protein 1A1 (Solanum lycopersicum (Tomato)).